A 91-amino-acid chain; its full sequence is Sec-independent protein translocase protein TatA (91 aa).

Residues Ala-2–Trp-22 form a helical membrane-spanning segment. A compositionally biased stretch (basic and acidic residues) spans Val-43–Lys-55. Positions Val-43 to Ala-91 are disordered. A compositionally biased stretch (polar residues) spans Ser-57–Val-81. The span at Glu-82–Ala-91 shows a compositional bias: basic and acidic residues.

The protein belongs to the TatA/E family. In terms of assembly, the Tat system comprises two distinct complexes: a TatABC complex, containing multiple copies of TatA, TatB and TatC subunits, and a separate TatA complex, containing only TatA subunits. Substrates initially bind to the TatABC complex, which probably triggers association of the separate TatA complex to form the active translocon.

It is found in the cell membrane. Part of the twin-arginine translocation (Tat) system that transports large folded proteins containing a characteristic twin-arginine motif in their signal peptide across membranes. TatA could form the protein-conducting channel of the Tat system. This is Sec-independent protein translocase protein TatA from Corynebacterium kroppenstedtii (strain DSM 44385 / JCM 11950 / CIP 105744 / CCUG 35717).